Here is a 497-residue protein sequence, read N- to C-terminus: Probable D-lactate dehydrogenase, mitochondrial (497 aa).

The FAD-binding PCMH-type domain occupies 65-246 (HRCRPPDVVV…TKATLRLYGV (182 aa)).

The protein belongs to the FAD-binding oxidoreductase/transferase type 4 family. FAD serves as cofactor.

It is found in the mitochondrion. It catalyses the reaction (R)-lactate + 2 Fe(III)-[cytochrome c] = 2 Fe(II)-[cytochrome c] + pyruvate + 2 H(+). Its function is as follows. Involved in D-lactate, but not L-lactate catabolic process. The polypeptide is Probable D-lactate dehydrogenase, mitochondrial (ldhd) (Danio rerio (Zebrafish)).